A 1478-amino-acid chain; its full sequence is Adhesion G protein-coupled receptor L2 (1478 aa).

The first 25 residues, 1-25 (MVSSGCRMRSLWFIIIISFLPNTEG), serve as a signal peptide directing secretion. Topologically, residues 26–855 (FSRAALPFGL…VHELLLTVIT (830 aa)) are extracellular. The SUEL-type lectin domain maps to 41–130 (SCEGYSIDLR…KYLEVQYECV (90 aa)). Asn-99 is a glycosylation site (N-linked (GlcNAc...) asparagine). In terms of domain architecture, Olfactomedin-like spans 139–398 (VCPGTLKAIV…ILRYSLEFGP (260 aa)). The cysteines at positions 140 and 322 are disulfide-linked. An N-linked (GlcNAc...) asparagine glycan is attached at Asn-335. Residues 422 to 458 (VSTTSTTSQKGPMSTTVAGSQEGSKGTKAPPAVSTTK) form a disordered region. The segment covering 430–445 (QKGPMSTTVAGSQEGS) has biased composition (polar residues). 7 N-linked (GlcNAc...) asparagine glycosylation sites follow: Asn-524, Asn-633, Asn-735, Asn-748, Asn-791, Asn-796, and Asn-817. Residues 663–841 (TRVSMPTENI…AILMAHREIA (179 aa)) form the GAIN-B domain. 2 cysteine pairs are disulfide-bonded: Cys-792/Cys-823 and Cys-811/Cys-825. Residues 792–841 (CSFWNYSERTMMGYWSTQGCKLVDTNKTRTTCACSHLTNFAILMAHREIA) form a GPS region. The chain crosses the membrane as a helical span at residues 856 to 876 (WVGIVISLVCLAICIFTFCFF). Residues 877-884 (RGLQSDRN) lie on the Cytoplasmic side of the membrane. The chain crosses the membrane as a helical span at residues 885–905 (TIHKNLCINLFIAEFIFLIGI). Residues 906-911 (DKTKYM) lie on the Extracellular side of the membrane. The helical transmembrane segment at 912-932 (IACPIFAGLLHFFFLAAFAWM) threads the bilayer. Residues 933–955 (CLEGVQLYLMLVEVFESEYSRKK) lie on the Cytoplasmic side of the membrane. A helical membrane pass occupies residues 956–976 (YYYVAGYLFPATVVGVSAAID). At 977 to 994 (YKSYGTEKACWLHVDNYF) the chain is on the extracellular side. Residues 995-1015 (IWSFIGPVTFIILLNIIFLVI) form a helical membrane-spanning segment. Residues 1016–1056 (TLCKMVKHSNTLKPDSSRLENINNYRVCDGYYNTDLPGSWV) are Cytoplasmic-facing. The helical transmembrane segment at 1057–1077 (LGAFALLCLLGLTWSFGLLFI) threads the bilayer. The Extracellular segment spans residues 1078-1081 (NEET). A helical transmembrane segment spans residues 1082–1102 (IVMAYLFTIFNAFQGVFIFIF). The Cytoplasmic segment spans residues 1103–1478 (HCALQKKVRK…EGQMQLVTSL (376 aa)). A disordered region spans residues 1378 to 1419 (AEDHLQSPNRDSLYTSMPNLRDSPYQESSPDMEEDLSPSRRS). Polar residues predominate over residues 1383 to 1395 (QSPNRDSLYTSMP). Phosphoserine is present on residues Ser-1393, Ser-1428, and Ser-1449.

This sequence belongs to the G-protein coupled receptor 2 family. Adhesion G-protein coupled receptor (ADGR) subfamily. Heterodimer of 2 chains generated by proteolytic processing; the large extracellular N-terminal fragment and the membrane-bound C-terminal fragment predominantly remain associated and non-covalently linked. In terms of processing, autoproteolytically processed at the GPS region of the GAIN-B domain; this cleavage modulates receptor activity. In terms of tissue distribution, ubiquitously expressed.

Its subcellular location is the postsynaptic cell membrane. Its activity is regulated as follows. Forms a heterodimer of 2 chains generated by proteolytic processing that remain associated through non-covalent interactions mediated by the GAIN-B domain. In the inactivated receptor, the Stachel sequence (also named stalk) is embedded in the GAIN-B domain, where it adopts a beta-strand conformation. On activation, the Stachel moves into the 7 transmembrane region and adopts a twisted hook-shaped configuration that forms contacts within the receptor, leading to coupling of a G-alpha protein, which activates signaling. The cleaved GAIN-B and N-terminal domains can then dissociate from the rest of the receptor. In terms of biological role, orphan adhesion G-protein coupled receptor (aGPCR), which mediates synapse specificity. Ligand binding causes a conformation change that triggers signaling via guanine nucleotide-binding proteins (G proteins) and modulates the activity of downstream effectors. Following G-protein coupled receptor activation, associates with cell adhesion molecules that are expressed at the surface of adjacent cells to direct synapse specificity. Specifically mediates the establishment of perforant-path synapses on CA1-region pyramidal neurons in the hippocampus. Localizes to postsynaptic spines in excitatory synapses in the S.lacunosum-moleculare and interacts with presynaptic cell adhesion molecules, such as teneurins, promoting synapse formation. This is Adhesion G protein-coupled receptor L2 (ADGRL2) from Bos taurus (Bovine).